We begin with the raw amino-acid sequence, 364 residues long: Anthranilate phosphoribosyltransferase (364 aa).

5-phospho-alpha-D-ribose 1-diphosphate is bound by residues Gly101, Gly104–Asp105, Thr109, Asn111–Thr114, Lys129–Ser137, and Gly141. Residue Gly101 participates in anthranilate binding. Ser113 serves as a coordination point for Mg(2+). An anthranilate-binding site is contributed by Asn132. Arg187 lines the anthranilate pocket. The Mg(2+) site is built by Asp245 and Glu246.

This sequence belongs to the anthranilate phosphoribosyltransferase family. As to quaternary structure, homodimer. Mg(2+) is required as a cofactor.

It carries out the reaction N-(5-phospho-beta-D-ribosyl)anthranilate + diphosphate = 5-phospho-alpha-D-ribose 1-diphosphate + anthranilate. It participates in amino-acid biosynthesis; L-tryptophan biosynthesis; L-tryptophan from chorismate: step 2/5. Its function is as follows. Catalyzes the transfer of the phosphoribosyl group of 5-phosphorylribose-1-pyrophosphate (PRPP) to anthranilate to yield N-(5'-phosphoribosyl)-anthranilate (PRA). The sequence is that of Anthranilate phosphoribosyltransferase from Mycolicibacterium gilvum (strain PYR-GCK) (Mycobacterium gilvum (strain PYR-GCK)).